The chain runs to 848 residues: Translation initiation factor IF-2 (848 aa).

The tract at residues 1–265 is disordered; sequence MSDTDGKKPL…GNQRAEKQVR (265 aa). The span at 89–162 shows a compositional bias: basic and acidic residues; that stretch reads KAREVEEAAQ…AEIAKPKTEA (74 aa). Residues 163 to 179 show a composition bias toward low complexity; it reads RPATPADRAAAEAAAVR. Residues 191-219 are compositionally biased toward basic and acidic residues; that stretch reads RKTDRDRDTRGGGGDDRDSRNKGRDDSRR. Residues 346-514 form the tr-type G domain; sequence PRAPIITIMG…AIALQAEILE (169 aa). The segment at 355 to 362 is G1; sequence GHVDHGKT. 355 to 362 provides a ligand contact to GTP; that stretch reads GHVDHGKT. Residues 380-384 form a G2 region; it reads GITQH. The tract at residues 402 to 405 is G3; the sequence is DTPG. GTP is bound by residues 402-406 and 456-459; these read DTPGH and NKID. The G4 stretch occupies residues 456-459; sequence NKID. The segment at 492-494 is G5; the sequence is SAK.

The protein belongs to the TRAFAC class translation factor GTPase superfamily. Classic translation factor GTPase family. IF-2 subfamily.

The protein resides in the cytoplasm. Functionally, one of the essential components for the initiation of protein synthesis. Protects formylmethionyl-tRNA from spontaneous hydrolysis and promotes its binding to the 30S ribosomal subunits. Also involved in the hydrolysis of GTP during the formation of the 70S ribosomal complex. The protein is Translation initiation factor IF-2 of Paracoccus denitrificans (strain Pd 1222).